We begin with the raw amino-acid sequence, 838 residues long: P protein (838 aa).

Residues 1–179 lie on the Cytoplasmic side of the membrane; the sequence is MHLEGRDGRR…KLRRCVQWLK (179 aa). Disordered regions lie at residues 38 to 60 and 74 to 94; these read LPRG…GQSS and KGRS…DSCF. The span at 78–87 shows a compositional bias: polar residues; that stretch reads HSSLPQMSSS. A helical membrane pass occupies residues 180 to 197; that stretch reads VMGLFAFVVLCSILFSLY. Topologically, residues 198–330 are extracellular; that stretch reads PDQGKLWQLL…QYLRGSVETQ (133 aa). N-linked (GlcNAc...) asparagine glycans are attached at residues asparagine 214, asparagine 218, and asparagine 273. A helical membrane pass occupies residues 331–347; it reads VTIATAILAGVYALIIF. Over 348–353 the chain is Cytoplasmic; sequence EIVHRT. A helical transmembrane segment spans residues 354–370; sequence LAAMLGSLAALAALAVI. Residues 371 to 384 lie on the Extracellular side of the membrane; that stretch reads GDRPSLTHVVEWID. A helical transmembrane segment spans residues 385–401; sequence FETLALLFGMMILVAIF. At 402–423 the chain is on the cytoplasmic side; that stretch reads SETGFFDYCAVKAYRLSRGRVW. A helical transmembrane segment spans residues 424-440; sequence AMIIMLCLIAAVLSAFL. The Extracellular portion of the chain corresponds to 441-513; it reads DNVTTMLLFT…DFAGFTAHMF (73 aa). N-linked (GlcNAc...) asparagine glycosylation occurs at asparagine 442. A helical membrane pass occupies residues 514–530; it reads IGICLVLLVCFPLLRLL. The Cytoplasmic portion of the chain corresponds to 531–620; sequence YWNRKLYNKE…LQKKHRISDG (90 aa). A helical membrane pass occupies residues 621 to 637; it reads ILLAKCLTVLGFVIFMF. Topologically, residues 638 to 647 are extracellular; that stretch reads FLNSFVPGIH. The chain crosses the membrane as a helical span at residues 648–664; the sequence is LDLGWIAILGAIWLLIL. The Cytoplasmic portion of the chain corresponds to 665 to 679; it reads ADIHDFEIILHRVEW. Residues 680 to 696 traverse the membrane as a helical segment; it reads ATLLFFAALFVLMEALA. Over 697–720 the chain is Extracellular; that stretch reads HLHLIEYVGEQTALLIKMVPEEQR. Residues 721–737 form a helical membrane-spanning segment; it reads LIAAIVLVVWVSALASS. Residues 738 to 760 are Cytoplasmic-facing; that stretch reads LIDNIPFTATMIPVLLNLSHDPE. Residues 761 to 777 traverse the membrane as a helical segment; it reads VGLPAPPLMYALAFGAC. Over 778-817 the chain is Extracellular; the sequence is LGGNGTLIGASANVVCAGIAEQHGYGFSFMEFFRLGFPMM. Asparagine 781 carries N-linked (GlcNAc...) asparagine glycosylation. Residues 818–834 form a helical membrane-spanning segment; sequence VVSCTVGMCYLLVAHVV. The Cytoplasmic segment spans residues 835-838; it reads VGWN.

It belongs to the CitM (TC 2.A.11) transporter family. As to expression, expressed in melanocytes and retinal pigment epithelium.

The protein localises to the melanosome membrane. It carries out the reaction chloride(in) = chloride(out). Functionally, contributes to a melanosome-specific anion (chloride) current that modulates melanosomal pH for optimal tyrosinase activity required for melanogenesis and the melanosome maturation. One of the components of the mammalian pigmentary system. May serve as a key control point at which ethnic skin color variation is determined. Major determinant of brown and/or blue eye color. Seems to regulate the post-translational processing of tyrosinase, which catalyzes the limiting reaction in melanin synthesis. This is P protein from Homo sapiens (Human).